The sequence spans 532 residues: CTP synthase (532 aa).

The amidoligase domain stretch occupies residues 1–267; the sequence is MAKFVFVTGG…HGLVLDQLQI (267 aa). Serine 13 contributes to the CTP binding site. Serine 13 contributes to the UTP binding site. 14-19 provides a ligand contact to ATP; sequence GLGKGI. Residue tyrosine 54 coordinates L-glutamine. Aspartate 71 is a binding site for ATP. Mg(2+) contacts are provided by aspartate 71 and glutamate 141. Residues 148-150, 188-193, and lysine 224 each bind CTP; these read DIE and KTKPIQ. Residues 188 to 193 and lysine 224 each bind UTP; that span reads KTKPIQ. One can recognise a Glutamine amidotransferase type-1 domain in the interval 292 to 532; the sequence is EVTFVGKYIE…GFVEAIVNNK (241 aa). L-glutamine is bound at residue glycine 354. Catalysis depends on cysteine 381, which acts as the Nucleophile; for glutamine hydrolysis. L-glutamine is bound by residues 382–385, glutamate 405, and arginine 462; that span reads LGMQ. Active-site residues include histidine 507 and glutamate 509.

Belongs to the CTP synthase family. In terms of assembly, homotetramer.

The enzyme catalyses UTP + L-glutamine + ATP + H2O = CTP + L-glutamate + ADP + phosphate + 2 H(+). It carries out the reaction L-glutamine + H2O = L-glutamate + NH4(+). The catalysed reaction is UTP + NH4(+) + ATP = CTP + ADP + phosphate + 2 H(+). The protein operates within pyrimidine metabolism; CTP biosynthesis via de novo pathway; CTP from UDP: step 2/2. With respect to regulation, allosterically activated by GTP, when glutamine is the substrate; GTP has no effect on the reaction when ammonia is the substrate. The allosteric effector GTP functions by stabilizing the protein conformation that binds the tetrahedral intermediate(s) formed during glutamine hydrolysis. Inhibited by the product CTP, via allosteric rather than competitive inhibition. In terms of biological role, catalyzes the ATP-dependent amination of UTP to CTP with either L-glutamine or ammonia as the source of nitrogen. Regulates intracellular CTP levels through interactions with the four ribonucleotide triphosphates. This Mesoplasma florum (strain ATCC 33453 / NBRC 100688 / NCTC 11704 / L1) (Acholeplasma florum) protein is CTP synthase.